Here is a 229-residue protein sequence, read N- to C-terminus: DNA repair protein RecO (229 aa).

This sequence belongs to the RecO family.

Involved in DNA repair and RecF pathway recombination. The chain is DNA repair protein RecO from Legionella pneumophila (strain Lens).